The following is a 138-amino-acid chain: Rapid alkalinization factor 23 (138 aa).

A signal peptide spans 1–28; it reads MRGLSRNSGAAAIFAILLILAVHNWSVA. A propeptide spans 29 to 88 (removed in mature form); that stretch reads VSSQSTEFAGDFPPFETECRGTIAECSVSAALGDGGDLFYGGGEMGEEFEMDSEINRRIL. Disulfide bonds link C106–C116 and C129–C135.

It belongs to the plant rapid alkalinization factor (RALF) family. Proteolytically cleaved, probably by SBT6.1 (S1P), a subtilisin-like serine protease (subtilase).

The protein resides in the secreted. Its function is as follows. Cell signaling peptide that may regulate plant stress, growth, and development. Mediates a rapid alkalinization of extracellular space by mediating a transient increase in the cytoplasmic Ca(2+) concentration leading to a calcium-dependent signaling events through a cell surface receptor and a concomitant activation of some intracellular mitogen-activated protein kinases. Negatively regulates brassinolide (BL)-mediated signaling pathway (e.g. BL-induced hypocotyl elongation and branching limitation). This chain is Rapid alkalinization factor 23 (RALF23), found in Arabidopsis thaliana (Mouse-ear cress).